Reading from the N-terminus, the 420-residue chain is Dihydrolipoyllysine-residue succinyltransferase component of 2-oxoglutarate dehydrogenase complex (420 aa).

A Lipoyl-binding domain is found at 3-78 (KINILVPDLP…ISQQTLGEIN (76 aa)). Residue K44 is modified to N6-lipoyllysine. Active-site residues include H391 and D395.

This sequence belongs to the 2-oxoacid dehydrogenase family. As to quaternary structure, forms a 24-polypeptide structural core with octahedral symmetry. Part of the 2-oxoglutarate dehydrogenase (OGDH) complex composed of E1 (2-oxoglutarate dehydrogenase), E2 (dihydrolipoamide succinyltransferase) and E3 (dihydrolipoamide dehydrogenase); the complex contains multiple copies of the three enzymatic components (E1, E2 and E3). It depends on (R)-lipoate as a cofactor.

It carries out the reaction N(6)-[(R)-dihydrolipoyl]-L-lysyl-[protein] + succinyl-CoA = N(6)-[(R)-S(8)-succinyldihydrolipoyl]-L-lysyl-[protein] + CoA. It participates in amino-acid degradation; L-lysine degradation via saccharopine pathway; glutaryl-CoA from L-lysine: step 6/6. Functionally, E2 component of the 2-oxoglutarate dehydrogenase (OGDH) complex which catalyzes the second step in the conversion of 2-oxoglutarate to succinyl-CoA and CO(2). This Buchnera aphidicola subsp. Acyrthosiphon pisum (strain APS) (Acyrthosiphon pisum symbiotic bacterium) protein is Dihydrolipoyllysine-residue succinyltransferase component of 2-oxoglutarate dehydrogenase complex (sucB).